The following is a 515-amino-acid chain: Cytochrome P450 monooxygenase paxP (515 aa).

A helical membrane pass occupies residues 20–36; the sequence is SLLWKLGVFAVLVYFLL. Cysteine 456 is a heme binding site.

It belongs to the cytochrome P450 family. Requires heme as cofactor.

The protein localises to the membrane. It participates in secondary metabolite biosynthesis. Functionally, cytochrome P450 monooxygenase; part of the ATM2 gene cluster that mediates the biosynthesis of paxilline, a mycotoxin that acts as an inhibitor of mammalian maxi-K channels. PaxG, the geranylgeranyl diphosphate (GGPP) synthase is proposed to catalyze the first step in paxilline biosynthesis. Condensation of indole-3-glycerol phosphate with GGPP by paxC then forms 3-geranylgeranylindole (3-GGI), followed by epoxidation and cyclization of this intermediate (by paxM and paxB) to form paspaline. Paspaline is subsequently converted to 13-desoxypaxilline by paxP, the latter being then converted to paxilline by paxQ. Finally paxilline can be mono- and di-prenylated by paxD. PaxP can also utilized beta-paxitriol and alpha-PC-M6 as substrates converting them to paxilline. The protein is Cytochrome P450 monooxygenase paxP of Penicillium paxilli.